A 247-amino-acid polypeptide reads, in one-letter code: Triosephosphate isomerase (247 aa).

2 residues coordinate substrate: Asn-10 and Lys-12. His-94 serves as the catalytic Electrophile. Catalysis depends on Glu-164, which acts as the Proton acceptor.

This sequence belongs to the triosephosphate isomerase family. In terms of assembly, homodimer.

It catalyses the reaction D-glyceraldehyde 3-phosphate = dihydroxyacetone phosphate. Its pathway is carbohydrate biosynthesis; gluconeogenesis. It functions in the pathway carbohydrate degradation; glycolysis; D-glyceraldehyde 3-phosphate from glycerone phosphate: step 1/1. This is Triosephosphate isomerase (Tpi) from Drosophila melanogaster (Fruit fly).